The following is an 894-amino-acid chain: Alpha-actinin-2 (894 aa).

The interval M1 to H254 is actin-binding. Calponin-homology (CH) domains follow at residues K38–A142 and T151–A257. T237 bears the Phosphothreonine mark. 4 Spectrin repeats span residues R281–N391, H401–R506, Q516–E627, and R637–T740. 2 EF-hand domains span residues E753–D788 and L789–D824. 6 residues coordinate Ca(2+): D766, N770, D777, D802, N804, and T808.

It belongs to the alpha-actinin family. In terms of assembly, homodimer; antiparallel. Also forms heterodimers with ACTN3. Interacts with ADAM12, MYOZ1, MYOZ2 and MYOZ3. Interacts via its C-terminal region with the LDB3 PDZ domain. Interacts with XIRP2. Interacts with DST isoform 1 (via N-terminus). Interacts with PARVB. Interacts with SYNPO2. In terms of processing, ubiquitinated by FBXL22, leading to proteasomal degradation. Expressed in both skeletal and cardiac muscle.

It localises to the cytoplasm. The protein resides in the myofibril. It is found in the sarcomere. Its subcellular location is the z line. Its function is as follows. F-actin cross-linking protein which is thought to anchor actin to a variety of intracellular structures. This is a bundling protein. This Homo sapiens (Human) protein is Alpha-actinin-2 (ACTN2).